The primary structure comprises 323 residues: MASIWVGPRGTIKDYPGFSPSVDAEAIRKAIRGLGTDEKTLINILTERSNAQRQLIVKQYQAAYEQELKDDLKGDLSGHFEHVMVALVTAPALFDAKQLKKSMKGTGTDEDALIEILTTRSSRQMKEISQAYYTVYKKSLGDDISSETSGDFRKALLTLADGRRDESLKVDEHLAKKDAQILYNAGENKWGTDEDKFTEVLCLRSFPQLKLTFDEYRNISQKDIEDSIKGELSGHFEDLLLAIVHCARNTPAFLAERLHQALKGAGTDEFTLNRIMVSRSEIDLLDIRHEFKKHYGYSLYSAIQSDTSGDYRTVLLKICGEDD.

At alanine 2 the chain carries N-acetylalanine. Annexin repeat units follow at residues 18 to 89, 90 to 161, 173 to 245, and 249 to 320; these read FSPS…ALVT, APAL…TLAD, HLAK…AIVH, and NTPA…KICG. N6-acetyllysine is present on lysine 177. Residue threonine 267 is modified to Phosphothreonine.

It belongs to the annexin family.

Its function is as follows. Inhibitor of phospholipase A2, also possesses anti-coagulant properties. This Mus musculus (Mouse) protein is Annexin A3 (Anxa3).